Reading from the N-terminus, the 51-residue chain is Photosystem I reaction center subunit IX (51 aa).

Residues 17–37 (FFSTAPVIALVFFTLTAGFLV) form a helical membrane-spanning segment.

Belongs to the PsaJ family.

The protein localises to the cellular thylakoid membrane. May help in the organization of the PsaE and PsaF subunits. The protein is Photosystem I reaction center subunit IX of Acaryochloris marina (strain MBIC 11017).